The following is a 555-amino-acid chain: MSKPETPAASNFLRPIVQADLDSGKHAKIITRFPPEPNGYLHIGHAKSICLNFGLAKEFGGECNLRFDDTNPAKEDQEYIDAIKSDVQWLGFQWAGEERYASDYFDQLHDWAVHLIKAGKAYVCDLTPEQAREYRGSLTEPGTNSPFRERSVEENLDLFARMKAGEFPDGARALRAKIDMASPNMNLRDPILYRIRHAHHHQTGDKWCIYPSYDFTHGQSDAIEGITHSICTLEFEDHRPLYEWFLANLPVPAQPRQYEFARLNLNYTITSKRKLKQLVDEKHVSGWDDPRMSTLSGFRRRGYTPASIRNFCDMIGVNRAGGVVDIGMLEFAIREDLDANAARAMCVLKPLKVVITNYPQDQVENLELPRHPKQDMGVRVLPFSREIYIDAGDFEEVPPAGFKRLVPGGEVRLRGSYVIRADEAVKDDQGNIVELRCSYDENTLGKNPEGRKVKGVIHWVPAAESVECEVRLYDRLFRSANPEKDEEGGSFLDNINPESLVVLKGCRAEPSLANAAPEERFQFEREGYFCADMKDSKPGAPVFNRTVTLRDSWGQ.

Positions 35–45 (PEPNGYLHIGH) match the 'HIGH' region motif. ATP contacts are provided by residues 36–38 (EPN) and 42–48 (HIGHAKS). Positions 68 and 213 each coordinate L-glutamine. ATP-binding positions include Thr-232 and 262-263 (RL). The 'KMSKS' region motif lies at 269–273 (ITSKR).

It belongs to the class-I aminoacyl-tRNA synthetase family. In terms of assembly, monomer.

Its subcellular location is the cytoplasm. The catalysed reaction is tRNA(Gln) + L-glutamine + ATP = L-glutaminyl-tRNA(Gln) + AMP + diphosphate. This is Glutamine--tRNA ligase from Stutzerimonas stutzeri (strain A1501) (Pseudomonas stutzeri).